A 1237-amino-acid polypeptide reads, in one-letter code: Anion exchange protein 2 (1237 aa).

Positions 1–238 (MSSAPRRPAS…YNLQERRRIG (238 aa)) are disordered. Topologically, residues 1–703 (MSSAPRRPAS…SDFRDALDPQ (703 aa)) are cytoplasmic. Composition is skewed to basic and acidic residues over residues 38–48 (LRTLGVERFEE) and 57–74 (GGEEPGRSYGEEDFEYHR). 2 stretches are compositionally biased toward basic residues: residues 75–84 (QSSHHIHHPL) and 93–109 (RRRKTPQGPGRKPRRRP). Serine 112, serine 131, serine 144, serine 170, serine 172, and serine 239 each carry phosphoserine. Residues 119–132 (TIEEGEEDEEEASE) show a composition bias toward acidic residues. Threonine 253 is modified (phosphothreonine). An N6-methyllysine modification is found at lysine 270. The tract at residues 285–316 (VRKNAKGSTQAAREGREPGPTPRARPRAPHKP) is disordered. Serine 439 carries the post-translational modification Phosphoserine. The disordered stretch occupies residues 445-466 (SLLGHHHAQGTESDPHVTEPLI). The next 4 helical transmembrane spans lie at 704–727 (CLAAVIFIYFAALSPAITFGGLLG), 733–770 (LIGVSELIMSTALQGVVFCLLGAQPLLVIGFSGPLLVF), 790–812 (VWIGFWLVFLALLMVALEGSFLV), and 822–843 (IFAFLISLIFIYETFYKLIKIF). Residues 704 to 1237 (CLAAVIFIYF…DEYNEMPMPV (534 aa)) form a membrane (anion exchange) region. At 844-896 (QEHPLHGCSGSNDSEAGSSSSSNMTWATTILVPDNSSASGQSGQEKPRGQPNT) the chain is on the extracellular side. N-linked (GlcNAc...) asparagine glycans are attached at residues asparagine 855, asparagine 866, and asparagine 878. The chain crosses the membrane as a helical span at residues 897 to 914 (ALLSLVLMAGTFFIAFFL). Residues 915-929 (RKFKNSRFFPGRIRR) are Cytoplasmic-facing. 5 consecutive transmembrane segments (helical) span residues 930 to 950 (VIGDFGVPIAILIMVLVDYSI), 984 to 1006 (PFPVWMMVASLLPAVLVFILIFM), 1032 to 1053 (LLLIVAMGGICALFGLPWLAAA), 1087 to 1132 (VTGL…IQFY), and 1159 to 1195 (MHLFTALQLLCLALLWAVMSTAASLAFPFILILTVPL). Cysteine 1169 carries the S-palmitoyl cysteine lipid modification.

This sequence belongs to the anion exchanger (TC 2.A.31) family. In terms of tissue distribution, expressed in the choroid plexus epithelium (at protein level). Expressed in the parotid gland and sublingual salivary gland acinar cells (at protein level). As to expression, widely expressed at similar levels in all tissues examined. Expressed in the testis. Predominantly expressed in stomach although they are also detected at lower levels in other tissues. Expressed in the testis. In terms of tissue distribution, stomach-specific. As to expression, expressed at slightly higher levels in lung and stomach than in other tissues.

It localises to the apical cell membrane. The protein resides in the basolateral cell membrane. The enzyme catalyses hydrogencarbonate(in) + chloride(out) = hydrogencarbonate(out) + chloride(in). Its activity is regulated as follows. Inhibited by 4,4'-diisothiocyanatostilbene-2,2'-disulfonic acid (DIDS) and acetazolamide. Muscarinic receptor stimulation enhances activity through a Ca(2+)-dependent mechanism. Its function is as follows. Sodium-independent anion exchanger which mediates the electroneutral exchange of chloride for bicarbonate ions across the cell membrane. Plays an important role in osteoclast differentiation and function. Regulates bone resorption and calpain-dependent actin cytoskeleton organization in osteoclasts via anion exchange-dependent control of pH. Essential for intracellular pH regulation in CD8(+) T-cells upon CD3 stimulation, modulating CD8(+) T-cell responses. In terms of biological role, plays a critical role in male fertility and spermiogenesis. In Mus musculus (Mouse), this protein is Anion exchange protein 2 (Slc4a2).